The chain runs to 334 residues: Nucleoid-associated protein VS_0951 (334 aa).

The protein belongs to the YejK family.

It localises to the cytoplasm. The protein resides in the nucleoid. The protein is Nucleoid-associated protein VS_0951 of Vibrio atlanticus (strain LGP32) (Vibrio splendidus (strain Mel32)).